We begin with the raw amino-acid sequence, 368 residues long: ICEBs1 integrase (368 aa).

The Core-binding (CB) domain occupies 61–143 (VSFPTLISIY…SLSKIFDTAV (83 aa)). A Tyr recombinase domain is found at 164-362 (KKMKFWRPEE…YPNKQKEMAD (199 aa)). Catalysis depends on residues R201, K239, H313, R316, and H339. Residue Y349 is the O-(3'-phospho-DNA)-tyrosine intermediate of the active site.

Belongs to the 'phage' integrase family.

Putative integrase that is involved in the insertion of the integrative and conjugative element ICEBs1. Required for the excision of ICEBs1 from the donor cell genome and subsequent integration in the recipient cell genome. Appears not to be transferred through the mating pore. Integration of ICEBs1 involves an attachment site in the chromosome, attB, and a site in the circular form of ICEBs1, attICEBs1. This chain is ICEBs1 integrase (int), found in Bacillus subtilis (strain 168).